A 502-amino-acid polypeptide reads, in one-letter code: Arginine-specific demethylase JMJ22 (502 aa).

The tract at residues 15–45 is disordered; that stretch reads KSKSKRLKLHQHEPESLFPEKEVEEEDEDEG. Residues 24-35 are compositionally biased toward basic and acidic residues; the sequence is HQHEPESLFPEK. The 47-residue stretch at 80-126 folds into the F-box domain; the sequence is LGNLQILSDELVLDILGLLGANHLGVLATVTKSFYIFANHEPLWRNL. Residues 279-439 form the JmjC domain; the sequence is EKVPVLDSEY…NVLEFLKKPN (161 aa). Positions 324, 326, and 407 each coordinate Fe cation.

It belongs to the JARID1 histone demethylase family. Fe(2+) serves as cofactor. Expressed in inflorescences, roots and siliques, and, at low levels, in leaves and stems.

Its subcellular location is the nucleus. The enzyme catalyses N(omega),N(omega)-dimethyl-L-arginyl-[protein] + 2-oxoglutarate + O2 = N(omega)-methyl-L-arginyl-[protein] + formaldehyde + succinate + CO2. In terms of biological role, histone demethylase that demethylates 'Arg-3' (H4R3me) of histone H4 with a specific activity for H4R3me2. Involved in the positive regulation of gene expression. Together with JMJ20, positively regulates seed germination by promoting the removal of repressive histone arginine methylations (e.g. H4R3me2) at GA3ox1 and GA3ox2 to trigger gibberellic acid (GA) biosynthesis. The chain is Arginine-specific demethylase JMJ22 from Arabidopsis thaliana (Mouse-ear cress).